A 348-amino-acid polypeptide reads, in one-letter code: Phosphate acyltransferase (348 aa).

Belongs to the PlsX family. As to quaternary structure, homodimer. Probably interacts with PlsY.

The protein localises to the cytoplasm. It catalyses the reaction a fatty acyl-[ACP] + phosphate = an acyl phosphate + holo-[ACP]. The protein operates within lipid metabolism; phospholipid metabolism. Catalyzes the reversible formation of acyl-phosphate (acyl-PO(4)) from acyl-[acyl-carrier-protein] (acyl-ACP). This enzyme utilizes acyl-ACP as fatty acyl donor, but not acyl-CoA. This chain is Phosphate acyltransferase, found in Francisella philomiragia subsp. philomiragia (strain ATCC 25017 / CCUG 19701 / FSC 153 / O#319-036).